A 304-amino-acid polypeptide reads, in one-letter code: Dihydroorotate dehydrogenase B (NAD(+)), catalytic subunit (304 aa).

FMN is bound by residues Ser-22 and 46–47 (KG). Residues Lys-46 and 70–74 (NAIGL) contribute to the substrate site. FMN is bound by residues Asn-100 and Asn-128. Asn-128 contributes to the substrate binding site. The active-site Nucleophile is Cys-131. Lys-166 and Ile-192 together coordinate FMN. 193 to 194 (NT) contacts substrate. FMN is bound by residues Gly-218, 244 to 245 (GG), and 266 to 267 (GT).

Belongs to the dihydroorotate dehydrogenase family. Type 1 subfamily. As to quaternary structure, heterotetramer of 2 PyrK and 2 PyrD type B subunits. FMN serves as cofactor.

It localises to the cytoplasm. It carries out the reaction (S)-dihydroorotate + NAD(+) = orotate + NADH + H(+). Its pathway is pyrimidine metabolism; UMP biosynthesis via de novo pathway; orotate from (S)-dihydroorotate (NAD(+) route): step 1/1. Its function is as follows. Catalyzes the conversion of dihydroorotate to orotate with NAD(+) as electron acceptor. The polypeptide is Dihydroorotate dehydrogenase B (NAD(+)), catalytic subunit (pyrD) (Pelobacter propionicus (strain DSM 2379 / NBRC 103807 / OttBd1)).